Reading from the N-terminus, the 677-residue chain is DNA ligase (677 aa).

NAD(+)-binding positions include 34-38 (DAQYD), 84-85 (SL), and glutamate 118. Lysine 120 serves as the catalytic N6-AMP-lysine intermediate. NAD(+) contacts are provided by arginine 141, glutamate 176, lysine 283, and lysine 307. Cysteine 403, cysteine 406, cysteine 421, and cysteine 427 together coordinate Zn(2+). The 84-residue stretch at 594–677 (ETASPISGKT…DLLKTVSNSE (84 aa)) folds into the BRCT domain.

It belongs to the NAD-dependent DNA ligase family. LigA subfamily. Mg(2+) serves as cofactor. Mn(2+) is required as a cofactor.

It catalyses the reaction NAD(+) + (deoxyribonucleotide)n-3'-hydroxyl + 5'-phospho-(deoxyribonucleotide)m = (deoxyribonucleotide)n+m + AMP + beta-nicotinamide D-nucleotide.. In terms of biological role, DNA ligase that catalyzes the formation of phosphodiester linkages between 5'-phosphoryl and 3'-hydroxyl groups in double-stranded DNA using NAD as a coenzyme and as the energy source for the reaction. It is essential for DNA replication and repair of damaged DNA. This chain is DNA ligase, found in Anaplasma phagocytophilum (strain HZ).